The chain runs to 399 residues: Exodeoxyribonuclease 7 large subunit (399 aa).

It belongs to the XseA family. As to quaternary structure, heterooligomer composed of large and small subunits.

The protein resides in the cytoplasm. It carries out the reaction Exonucleolytic cleavage in either 5'- to 3'- or 3'- to 5'-direction to yield nucleoside 5'-phosphates.. Bidirectionally degrades single-stranded DNA into large acid-insoluble oligonucleotides, which are then degraded further into small acid-soluble oligonucleotides. The chain is Exodeoxyribonuclease 7 large subunit from Clostridium beijerinckii (strain ATCC 51743 / NCIMB 8052) (Clostridium acetobutylicum).